We begin with the raw amino-acid sequence, 167 residues long: Large ribosomal subunit protein bL9 (167 aa).

It belongs to the bacterial ribosomal protein bL9 family.

Binds to the 23S rRNA. This chain is Large ribosomal subunit protein bL9, found in Chlamydia trachomatis serovar L2 (strain ATCC VR-902B / DSM 19102 / 434/Bu).